Here is a 354-residue protein sequence, read N- to C-terminus: Uroporphyrinogen decarboxylase (354 aa).

Substrate is bound by residues 27-31 (RQAGR), phenylalanine 46, aspartate 77, tyrosine 153, threonine 208, and histidine 326.

Belongs to the uroporphyrinogen decarboxylase family. As to quaternary structure, homodimer.

Its subcellular location is the cytoplasm. The enzyme catalyses uroporphyrinogen III + 4 H(+) = coproporphyrinogen III + 4 CO2. Its pathway is porphyrin-containing compound metabolism; protoporphyrin-IX biosynthesis; coproporphyrinogen-III from 5-aminolevulinate: step 4/4. Catalyzes the decarboxylation of four acetate groups of uroporphyrinogen-III to yield coproporphyrinogen-III. This chain is Uroporphyrinogen decarboxylase, found in Neisseria meningitidis serogroup A / serotype 4A (strain DSM 15465 / Z2491).